We begin with the raw amino-acid sequence, 176 residues long: Flavodoxin-like domain-containing protein BilS (176 aa).

It functions in the pathway porphyrin-containing compound metabolism; protoheme degradation. In terms of biological role, together with BilR, catalyzes reduction of mesobilirubin and/or bilirubin to urobilinogen, a key step during heme degradation. BilS is probably involved in electron transfer for the bilirubin reductase BilR. In Clostridioides difficile (strain CD3), this protein is Flavodoxin-like domain-containing protein BilS.